Reading from the N-terminus, the 222-residue chain is uncharacterized protein (222 aa).

Residues 1 to 27 (MSFTRRKFVLGMGTVIFFTGSASSLLA) constitute a signal peptide (tat-type signal). 3 consecutive 4Fe-4S ferredoxin-type domains span residues 37–67 (YAMIHDESRCNGCNICARACRKTNHVPAQGS), 83–114 (TQYHFFRQSCQHCEDAPCIDVCPTGASWRDEQ), and 115–144 (GIVRVEKSQCIGCSYCIGACPYQVRYLNPV). Positions 46, 49, 52, 56, 92, 95, 100, 104, 124, 127, 130, 134, 151, 154, 167, and 171 each coordinate [4Fe-4S] cluster.

In terms of processing, exported by the Tat system. The position of the signal peptide cleavage has not been experimentally proven. Can also be exported by the Sec system.

This is an uncharacterized protein from Escherichia coli (strain K12).